The primary structure comprises 150 residues: Small ribosomal subunit protein uS11y (150 aa).

Residue Ser-19 is modified to Phosphoserine.

Belongs to the universal ribosomal protein uS11 family.

The protein resides in the cytoplasm. In Arabidopsis thaliana (Mouse-ear cress), this protein is Small ribosomal subunit protein uS11y (RPS14B).